We begin with the raw amino-acid sequence, 502 residues long: Neuronal acetylcholine receptor subunit alpha-7 (502 aa).

An N-terminal signal peptide occupies residues 1 to 22 (MCGGRGGIWLALAAALLHVSLQ). Residues 23–233 (GEFQRRLYKE…VTMRRRTLYY (211 aa)) are Extracellular-facing. The Ca(2+) site is built by arginine 42 and valine 44. N-linked (GlcNAc...) asparagine glycosylation is found at asparagine 46, asparagine 90, and asparagine 133. A disulfide bond links cysteine 150 and cysteine 164. Ca(2+) contacts are provided by serine 172 and tyrosine 210. Cysteine 212 and cysteine 213 are joined by a disulfide. 3 helical membrane passes run 234 to 254 (GLNL…VFLL), 262 to 282 (ISLG…VAEI), and 295 to 315 (QYFA…VIVL). The interval 260–267 (EKISLGIT) is essential for TMEM35A/NACHO-mediated proper subunit assembly and trafficking to cell membrane. Topologically, residues 316–469 (RYHHHDPDGG…WKFAACVVDR (154 aa)) are cytoplasmic. The chain crosses the membrane as a helical span at residues 470–490 (LCLMAFSVFTIICTIGILMSA).

The protein belongs to the ligand-gated ion channel (TC 1.A.9) family. Acetylcholine receptor (TC 1.A.9.1) subfamily. Alpha-7/CHRNA7 sub-subfamily. As to quaternary structure, homopentamer. Can also form heteropentamers with CHRNB2, mainly found in basal forebrain cholinergic neurons. Interacts with RIC3; which is required for proper folding and assembly. Interacts with LYPD6. Interacts with CANX. Post-translationally, glycosylations at Asn-46, Asn-90 and Asn-133 are essential for TMEM35A/NACHO-mediated proper subunit assembly and trafficking to the cell membrane. Expressed in neurons. Expressed in umbrella cells of urothelium (at protein level).

The protein localises to the postsynaptic cell membrane. It localises to the cell membrane. The catalysed reaction is Ca(2+)(in) = Ca(2+)(out). The enzyme catalyses K(+)(in) = K(+)(out). It catalyses the reaction Na(+)(in) = Na(+)(out). It carries out the reaction choline(out) = choline(in). The catalysed reaction is NH4(+)(in) = NH4(+)(out). The enzyme catalyses L-arginine(in) = L-arginine(out). It catalyses the reaction guanidine(out) = guanidine(in). With respect to regulation, activated by a myriad of ligands such as acetylcholine, cytisine, nicotine, choline and epibatidine. Oligomeric amyloid-beta protein 42 activates specifially CHRNA7:CHRNB2 nAchRs. Activity is modulated by positive allosteric modulators (PAMs), such as flavonoids, with a wide range of chemical diversity, pharmacological sensitivity and efficacy. AChR activity is inhibited by the antagonists alpha-conotoxons RgIA, ImI and ImII, small disulfide-constrained peptides from cone snails. Alpha-conotoxin PnIC selectively inhibits CHRNA7:CHRNB2 over CHRNA7 homopentamer. In terms of biological role, component of neuronal acetylcholine receptors (nAChRs) that function as pentameric, ligand-gated cation channels with high calcium permeability among other activities. nAChRs are excitatory neurotrasnmitter receptors formed by a collection of nAChR subunits known to mediate synaptic transmission in the nervous system and the neuromuscular junction. Each nAchR subunit confers differential attributes to channel properties, including activation, deactivation and desensitization kinetics, pH sensitivity, cation permeability, and binding to allosteric modulators. CHRNA7 forms homopentameric neuronal acetylcholine receptors abundantly expressed in the central nervous system, characterized by fast desensitization and high calcium permeability. Also forms heteropentamers with CHRNB2, mainly expressed in basal forebrain cholinergic neurons. Involved in the modulation of calcium-dependent signaling pathways and influences the release of neurotransmitters, including dopamine, glutamate and GABA. Also expressed in non-neuronal cells such as immune cells like lymphocytes, monocytes and macrophages. In T cells, activation induces metabotropic signaling that results in an increase of intracellular Ca2+ concentrations, independent of ionotropic receptor functions. In macrophages, required for acetylcholine-mediated inhibition of TNF and other inflammatory cytokine release. Once activated by acetylcholine, nicotine or other agonists, selectively inhibits production of pro-inflammatory cytokines while leaving anti-inflammatory cytokines undisturbed. Stimulates the cholinergic anti-inflammatory pathway, controlling inflammation by inhibiting NFKB nuclear translocation and activating the JAK2-STAT3 pathway, independently of ion channel activity. Also expressed in the urothelium where it modulates reflex bladder activity by increasing intracellular calcium through internal stores and decreasing basal ATP release. The protein is Neuronal acetylcholine receptor subunit alpha-7 (Chrna7) of Rattus norvegicus (Rat).